We begin with the raw amino-acid sequence, 619 residues long: Putative zinc transporter At3g08650 (619 aa).

15 helical membrane-spanning segments follow: residues 25–45 (MMHS…VVFI), 102–122 (VALF…PFFF), 129–149 (WAGI…FDLV), 155–175 (HGSG…IWLC), 198–218 (VVLV…GVGV), 230–250 (LLVT…VSMV), 261–281 (AMLW…PAFL), 289–309 (FLPF…IAEV), 354–374 (GFFV…FLVA), 383–403 (HALL…WRPL), 405–425 (LLLS…IGAG), 465–485 (LLAC…LGVA), 528–548 (AAAL…LAGI), 552–572 (GLDH…WQVI), and 585–605 (VGMV…RLVC).

Belongs to the ZIP transporter (TC 2.A.5) family. ZupT subfamily.

The protein resides in the membrane. Functionally, may transport zinc. This is Putative zinc transporter At3g08650 from Arabidopsis thaliana (Mouse-ear cress).